We begin with the raw amino-acid sequence, 541 residues long: MAIMPYIRQGTVINALVILFSFWAFLSLIRVIRRRSSTTPLKGPPSESFIFGLRQIIHKSEDSDALYEQWADKYGSVYQVSEPMGSKRVVLCDPKAILHLYSKDTFDFVQTEINRLFLGKYFGRGILWAEGESHRRQRKALTPAFSNVAIRNITPVFFDSAYKTKAAWDATFESNPTKERIIIEVQTWMNHISLDSIGIAGFSHDFGSIQGKPSAVLDVFDSFSNVQPDATTTLMFTLAATFPIMLNIPNNRNALFTKLHQTILEISDELLESTRKEEEGKAGGGRGDAKSIIGSLIKAESANSHLRISQEEVIAQMNVLLLAGYETTSVSLTWALIELSRHPDVQQKLRDELSRFAATDPTWEELTNGLPYLDAVVHEILRLHAPLDETIRVAANDDVIPLGTPLQTASGNIVDRISIGKGTTVSIPTRCMNRLTGLWGDNAKEFVPDRWLNDEKDLLKANEIQGYRHLLTFIDGPRTCLGKGFAIAEFKAVLSVLIRHYTFEFPDGPETKVVGHRSIMERPKVAGQDGAKVPLLVRRVE.

Residues 12-32 (VINALVILFSFWAFLSLIRVI) form a helical membrane-spanning segment. Position 480 (cysteine 480) interacts with heme.

It belongs to the cytochrome P450 family. The cofactor is heme.

Its subcellular location is the membrane. It functions in the pathway secondary metabolite biosynthesis; terpenoid biosynthesis. Cytochrome P450 monooxygenase; part of the gene cluster that mediates the biosynthesis of clavilactone A, a meroterpenoid that features a unique benzo-fused ten-membered carbocyclic ring unit with an alpha,beta-epoxy-gamma-lactone moiety, forming an intriguing 10/5/3 tricyclic nested skeleton. Cytochrome P450 monooxygenases claO, claP, claQ, claU, and claW are close orthologs, suggesting that a redundant function or pseudogenes are present in the cla cluster. These monoxygenases are not involved in clavilactone A biosynthesis nor its modification. ClaR, ClaS and ClaT are sufficient to produce clavilactone A. The biosynthesis begins with the prenyltransferase claS that transfers geranyl pyrophosphate (GPP) to hydroquinone to produces geranylhydroquinone. The cytochrome P450 monooxygenase claR then catalyzes the diradical coupling reaction between the intramolecular hydroquinone and allyl moieties to form the benzo-fused ten-membered carbocyclic ring unit of wigantol. Finally the cytochrome P450 monooxygenase claT exquisitely and stereoselectively assembles the alpha,beta-epoxy-gamma-lactone moiety, producing clavilactone A via arnebinol A. The chain is Cytochrome P450 monooxygenase claW from Ampulloclitocybe clavipes (Club foot).